We begin with the raw amino-acid sequence, 60 residues long: Conotoxin Pu5.6 (60 aa).

The signal sequence occupies residues 1-19 (MRCVPVFVILLLLIASAAS). Residues 20–47 (IDAQQKTKDDAPLTSLNDNALQQHWNKR) constitute a propeptide that is removed on maturation.

This sequence belongs to the conotoxin T superfamily. Contains 2 disulfide bonds that can be either 'C1-C3, C2-C4' or 'C1-C4, C2-C3', since these disulfide connectivities have been observed for conotoxins with cysteine framework V (for examples, see AC P0DQQ7 and AC P81755). In terms of tissue distribution, expressed by the venom duct.

The protein localises to the secreted. The sequence is that of Conotoxin Pu5.6 from Conus pulicarius (Flea-bitten cone).